The sequence spans 209 residues: Putative cardiolipin synthase (209 aa).

4 helical membrane passes run 27-47, 82-102, 126-146, and 157-177; these read AFVY…ILVF, VTVP…VLTL, VTYV…TILL, and LLAC…WAFV.

Belongs to the CDP-alcohol phosphatidyltransferase class-I family.

It is found in the cell membrane. The catalysed reaction is a CDP-1,2-diacyl-sn-glycerol + a 1,2-diacyl-sn-glycero-3-phospho-(1'-sn-glycerol) = a cardiolipin + CMP + H(+). It participates in lipid metabolism; phospholipid metabolism. In terms of biological role, may catalyze the biosynthesis of cardiolipin from phosphatidylglycerol (PG) and CDP-diacylglycerol. The chain is Putative cardiolipin synthase from Mycobacterium bovis (strain ATCC BAA-935 / AF2122/97).